The following is a 150-amino-acid chain: Large ribosomal subunit protein uL13 (150 aa).

The interval 129 to 150 (TEHPHAAQKPQPLQLNPSASAQ) is disordered. The segment covering 139 to 150 (QPLQLNPSASAQ) has biased composition (polar residues).

This sequence belongs to the universal ribosomal protein uL13 family. Part of the 50S ribosomal subunit.

Its function is as follows. This protein is one of the early assembly proteins of the 50S ribosomal subunit, although it is not seen to bind rRNA by itself. It is important during the early stages of 50S assembly. The polypeptide is Large ribosomal subunit protein uL13 (Synechococcus sp. (strain CC9605)).